A 362-amino-acid polypeptide reads, in one-letter code: MARFLVALLAATLVAVQAGGQLGHAAPATGEVFWRAVLPHSPLPDAVLRLLKQPAAESTSFVRDPEDRPPFDYRDYSRSSSDDEPSKSTVAASGAGGFDYDNYSGADERRGATDEYKAPSSSLAGSGAYMARGGKAETTTVFFHEEAVRVGRRLPFHFPPATPAALGFLPRQVADSVPFTTAALPGILATFGIASDSTTVPSMEATLRACESPTIAGESKFCATSLEALVERAMGVLGTRDIRPVTSTLPRAGAPLQTYTVVAVQPVEGGPVFVACHDEAYPYTVYRCHTTGPSRAYTVDMEGARGADAVTIAAVCHTDTSLWNPEHVSFKLLGTKPGGTPVCHLMPYGHIIWAKNVKRSPA.

A signal peptide spans 1-20 (MARFLVALLAATLVAVQAGG). Positions 58 to 94 (STSFVRDPEDRPPFDYRDYSRSSSDDEPSKSTVAASG) are disordered. The segment covering 63-86 (RDPEDRPPFDYRDYSRSSSDDEPS) has biased composition (basic and acidic residues). N-linked (GlcNAc...) asparagine glycosylation occurs at N102. A BURP domain is found at 142-356 (FFHEEAVRVG…PYGHIIWAKN (215 aa)).

In terms of tissue distribution, specifically expressed in anthers, in the tapetum and microspores (at protein level).

Required for pollen development. Probably synthesized in the tapetum, packaged in Ubisch bodies and transported at appropriate stages to the micropsores. This chain is Protein RAFTIN 1B (RAFTIN1B), found in Triticum aestivum (Wheat).